Reading from the N-terminus, the 238-residue chain is Dolichyldiphosphatase 1 (238 aa).

The next 4 helical transmembrane spans lie at 33-53 (LAYLSLSPVVIIVGFVTLIIF), 100-120 (PSSHSQFMWFFSVYSFLFLYL), 130-150 (FLDLLWRHVLSLGLLTAAFLV), and 162-182 (WSQVLYGGVAGSLMAIAWFAF).

It belongs to the dolichyldiphosphatase family.

It is found in the endoplasmic reticulum membrane. It carries out the reaction a di-trans,poly-cis-dolichyl diphosphate + H2O = a di-trans,poly-cis-dolichyl phosphate + phosphate + H(+). Its pathway is protein modification; protein glycosylation. Its function is as follows. Required for efficient N-glycosylation. Necessary for maintaining optimal levels of dolichol-linked oligosaccharides. Hydrolyzes dolichyl pyrophosphate at a very high rate and dolichyl monophosphate at a much lower rate. Does not act on phosphatidate. This chain is Dolichyldiphosphatase 1 (DOLPP1), found in Rhinolophus ferrumequinum (Greater horseshoe bat).